The sequence spans 637 residues: Chaperone protein DnaK (637 aa).

Threonine 196 carries the post-translational modification Phosphothreonine; by autocatalysis. Disordered regions lie at residues 503 to 525 (AEINKMKDDAKQHADEDKKRKEE) and 598 to 637 (SGAGAAQAQPEAPQNSGSSQSSGGDGAVNAEYEVINDDKK). The span at 598–619 (SGAGAAQAQPEAPQNSGSSQSS) shows a compositional bias: low complexity.

Belongs to the heat shock protein 70 family.

Its function is as follows. Acts as a chaperone. In Chlorobium chlorochromatii (strain CaD3), this protein is Chaperone protein DnaK.